A 77-amino-acid chain; its full sequence is Chassatide C2 (77 aa).

An N-terminal signal peptide occupies residues 1–24; sequence MAKFANYLMLFLLVASLVMLEAQS. Positions 25–44 are cleaved as a propeptide — removed in mature form; sequence SDTIKVPDLGKRLLMNRDPN. The segment at residues 45–75 is a cross-link (cyclopeptide (Gly-Asn)); the sequence is GIPCAESCVWIPCTITALMGCSCKNNVCYNN. Disulfide bonds link Cys-48-Cys-65, Cys-52-Cys-67, and Cys-57-Cys-72. Met-63 bears the Methionine sulfoxide; in form chassatide chaC2A mark. Residues 76 to 77 constitute a propeptide, removed in mature form; that stretch reads EL.

It belongs to the cyclotide family. Bracelet subfamily. Post-translationally, this is a cyclic peptide. In terms of tissue distribution, expressed in fruit, pedicel and stem but not in leaf and root (at protein level).

In terms of biological role, chassatide C2: Probably participates in a plant defense mechanism. Has no activity against bacteria up to a concentration of 80 uM. Has cytotoxic but no hemolytic activity. Chassatide C2A: Probably participates in a plant defense mechanism. Has no activity against bacteria up to a concentration of 80 uM. Has no cytotoxic and no hemolytic activity. The polypeptide is Chassatide C2 (Chassalia chartacea (Chassalia curviflora)).